The chain runs to 251 residues: tRNA (guanine-N(7)-)-methyltransferase (251 aa).

S-adenosyl-L-methionine is bound by residues glycine 72, 95–96, 132–133, and leucine 152; these read EI and NA. Aspartate 155 is an active-site residue. 230–232 is an S-adenosyl-L-methionine binding site; that stretch reads SEE.

It belongs to the class I-like SAM-binding methyltransferase superfamily. TrmB family.

It is found in the nucleus. The catalysed reaction is guanosine(46) in tRNA + S-adenosyl-L-methionine = N(7)-methylguanosine(46) in tRNA + S-adenosyl-L-homocysteine. The protein operates within tRNA modification; N(7)-methylguanine-tRNA biosynthesis. Functionally, catalyzes the formation of N(7)-methylguanine at position 46 (m7G46) in tRNA. This is tRNA (guanine-N(7)-)-methyltransferase from Drosophila willistoni (Fruit fly).